A 317-amino-acid polypeptide reads, in one-letter code: Transaldolase (317 aa).

The Schiff-base intermediate with substrate role is filled by lysine 125.

The protein belongs to the transaldolase family. Type 1 subfamily. In terms of assembly, homodimer.

It localises to the cytoplasm. It catalyses the reaction D-sedoheptulose 7-phosphate + D-glyceraldehyde 3-phosphate = D-erythrose 4-phosphate + beta-D-fructose 6-phosphate. Its pathway is carbohydrate degradation; pentose phosphate pathway; D-glyceraldehyde 3-phosphate and beta-D-fructose 6-phosphate from D-ribose 5-phosphate and D-xylulose 5-phosphate (non-oxidative stage): step 2/3. In terms of biological role, transaldolase is important for the balance of metabolites in the pentose-phosphate pathway. The polypeptide is Transaldolase (Delftia acidovorans (strain DSM 14801 / SPH-1)).